The primary structure comprises 100 residues: UPF0213 protein YhbQ (100 aa).

One can recognise a GIY-YIG domain in the interval 2 to 77; it reads TPWFLYLIRT…KQLTKRQKER (76 aa).

Belongs to the UPF0213 family.

This is UPF0213 protein YhbQ from Escherichia fergusonii (strain ATCC 35469 / DSM 13698 / CCUG 18766 / IAM 14443 / JCM 21226 / LMG 7866 / NBRC 102419 / NCTC 12128 / CDC 0568-73).